The sequence spans 409 residues: Na(+)-translocating NADH-quinone reductase subunit F (409 aa).

A helical transmembrane segment spans residues 5 to 25 (FIFGIGAFTAIVLVLAVVILI). In terms of domain architecture, 2Fe-2S ferredoxin-type spans 34-128 (GDITISINDD…SMDVELPEEV (95 aa)). [2Fe-2S] cluster contacts are provided by Cys-71, Cys-77, Cys-80, and Cys-112. The FAD-binding FR-type domain occupies 131–271 (VKKWECTVIS…SGPFGEFFAK (141 aa)).

Belongs to the NqrF family. Composed of six subunits; NqrA, NqrB, NqrC, NqrD, NqrE and NqrF. Requires [2Fe-2S] cluster as cofactor. FAD is required as a cofactor.

It localises to the cell inner membrane. The enzyme catalyses a ubiquinone + n Na(+)(in) + NADH + H(+) = a ubiquinol + n Na(+)(out) + NAD(+). In terms of biological role, NQR complex catalyzes the reduction of ubiquinone-1 to ubiquinol by two successive reactions, coupled with the transport of Na(+) ions from the cytoplasm to the periplasm. The first step is catalyzed by NqrF, which accepts electrons from NADH and reduces ubiquinone-1 to ubisemiquinone by a one-electron transfer pathway. This Actinobacillus succinogenes (strain ATCC 55618 / DSM 22257 / CCUG 43843 / 130Z) protein is Na(+)-translocating NADH-quinone reductase subunit F.